The following is a 287-amino-acid chain: PIH1 domain-containing protein 1 (287 aa).

The protein belongs to the PIH1 family.

The protein localises to the nucleus. Involved in the assembly of C/D box small nucleolar ribonucleoprotein (snoRNP) particles. Recruits the SWI/SNF complex to the core promoter of rRNA genes and enhances pre-rRNA transcription. Mediates interaction of TELO2 with the R2TP complex which is necessary for the stability of MTOR and SMG1. Positively regulates the assembly and activity of the mTORC1 complex. In Danio rerio (Zebrafish), this protein is PIH1 domain-containing protein 1 (pih1d1).